The following is a 20-amino-acid chain: Fibrinogen beta chain (20 aa).

Acidic residues predominate over residues 1–12; that stretch reads IIDYYDEGEEDR. A disordered region spans residues 1–20; the sequence is IIDYYDEGEEDRDVGVVDAR.

In terms of assembly, heterohexamer; disulfide linked. Contains 2 sets of 3 non-identical chains (alpha, beta and gamma). The 2 heterotrimers are in head to head conformation with the N-termini in a small central domain. Post-translationally, conversion of fibrinogen to fibrin is triggered by thrombin, which cleaves fibrinopeptides A and B from alpha and beta chains, and thus exposes the N-terminal polymerization sites responsible for the formation of the soft clot.

Its subcellular location is the secreted. Cleaved by the protease thrombin to yield monomers which, together with fibrinogen alpha (FGA) and fibrinogen gamma (FGG), polymerize to form an insoluble fibrin matrix. Fibrin has a major function in hemostasis as one of the primary components of blood clots. In addition, functions during the early stages of wound repair to stabilize the lesion and guide cell migration during re-epithelialization. Was originally thought to be essential for platelet aggregation, based on in vitro studies using anticoagulated blood. However subsequent studies have shown that it is not absolutely required for thrombus formation in vivo. Enhances expression of SELP in activated platelets. Maternal fibrinogen is essential for successful pregnancy. Fibrin deposition is also associated with infection, where it protects against IFNG-mediated hemorrhage. May also facilitate the antibacterial immune response via both innate and T-cell mediated pathways. The protein is Fibrinogen beta chain (FGB) of Felis catus (Cat).